The primary structure comprises 1368 residues: Protein suppressor 2 of zeste (1368 aa).

The RING-type zinc finger occupies 35-74 (CRLCRGYMIDPTTVDYCYHTYCRSCILKHLLRAVYCPECK). Disordered stretches follow at residues 245-321 (SRIN…FKSL), 448-628 (QPLQ…QQQQ), 640-718 (TLPT…AVPQ), 861-903 (AGGK…KRSC), 935-1001 (ALSG…NGTA), 1057-1103 (SANP…STSN), 1116-1141 (ISANSNGGPSTTSGSNSNGTTNGDDL), 1161-1193 (AASSGNGSGSTSSSSAKPKNANALVRPQNASVR), 1211-1271 (STAA…KKPT), and 1298-1322 (VLSSNAAKSPELAKTTTAVALRPEP). Polar residues predominate over residues 449 to 461 (PLQQSASNPDSKY). Over residues 462–495 (SPNASPMSSCSSSTNGSSSSLGTADASTSTSTSS) the composition is skewed to low complexity. The span at 496–506 (SHRKRKKKHSK) shows a compositional bias: basic residues. 2 stretches are compositionally biased toward low complexity: residues 599–628 (AEPEQQQQQQQQQQQPQQQQQQQQQQQQQQ) and 672–689 (PKQQQQQMPQQPQAVLQQ). 2 stretches are compositionally biased toward polar residues: residues 936–953 (LSGQRNNKGNSSNSNAYR) and 962–977 (LRNTAAPQHSFPSKSS). Composition is skewed to low complexity over residues 1078–1099 (NNNNNNNNNNNNNNNNNNNNNN), 1119–1138 (NSNGGPSTTSGSNSNGTTNG), 1161–1183 (AASSGNGSGSTSSSSAKPKNANA), and 1231–1263 (STSNPGSLSPTNTSSSSSSSSSGSSGCSAATSP).

It localises to the nucleus. Functionally, regulates expression of the homeotic selector genes by influencing higher-order chromatin structure through interaction with other proteins. This chain is Protein suppressor 2 of zeste (Su(z)2), found in Drosophila melanogaster (Fruit fly).